Reading from the N-terminus, the 118-residue chain is Small ribosomal subunit protein uS13 (118 aa).

The interval 93-118 (RGLPVRGQRTKTNARTRKGPRKPIRK) is disordered.

The protein belongs to the universal ribosomal protein uS13 family. Part of the 30S ribosomal subunit. Forms a loose heterodimer with protein S19. Forms two bridges to the 50S subunit in the 70S ribosome.

In terms of biological role, located at the top of the head of the 30S subunit, it contacts several helices of the 16S rRNA. In the 70S ribosome it contacts the 23S rRNA (bridge B1a) and protein L5 of the 50S subunit (bridge B1b), connecting the 2 subunits; these bridges are implicated in subunit movement. Contacts the tRNAs in the A and P-sites. This Pseudomonas syringae pv. tomato (strain ATCC BAA-871 / DC3000) protein is Small ribosomal subunit protein uS13.